The following is a 157-amino-acid chain: Trafficking protein particle complex subunit 6b (157 aa).

It belongs to the TRAPP small subunits family. BET3 subfamily. In terms of assembly, homodimer. Part of a TRAPP complex.

Its subcellular location is the golgi apparatus. The protein resides in the cis-Golgi network. It is found in the endoplasmic reticulum. Component of a transport protein particle (TRAPP) complex that may function in specific stages of inter-organelle traffic. Specifically involved in the early development of neural circuitry, likely by controlling the frequency and amplitude of intracellular calcium transients implicated in the regulation of neuron differentiation and survival. In Danio rerio (Zebrafish), this protein is Trafficking protein particle complex subunit 6b.